The primary structure comprises 1298 residues: Phosphoribosylformylglycinamidine synthase (1298 aa).

The disordered stretch occupies residues 298–328 (TAIAPFPGASTGSGGEIRDEGATGRGAKPKA). ATP-binding positions include 305–316 (GASTGSGGEIRD), 384–386 (TGY), and Ala-676. The Mg(2+) site is built by Asp-677, Glu-716, Asn-720, and Asp-884. Ser-886 serves as a coordination point for ATP. Residues 1045 to 1298 (VAILREQGVN…MFRNARVWVD (254 aa)) form the Glutamine amidotransferase type-1 domain. Catalysis depends on Cys-1138, which acts as the Nucleophile. Residues His-1263 and Glu-1265 contribute to the active site.

The protein in the N-terminal section; belongs to the FGAMS family. As to quaternary structure, monomer.

It localises to the cytoplasm. The catalysed reaction is N(2)-formyl-N(1)-(5-phospho-beta-D-ribosyl)glycinamide + L-glutamine + ATP + H2O = 2-formamido-N(1)-(5-O-phospho-beta-D-ribosyl)acetamidine + L-glutamate + ADP + phosphate + H(+). Its pathway is purine metabolism; IMP biosynthesis via de novo pathway; 5-amino-1-(5-phospho-D-ribosyl)imidazole from N(2)-formyl-N(1)-(5-phospho-D-ribosyl)glycinamide: step 1/2. Functionally, phosphoribosylformylglycinamidine synthase involved in the purines biosynthetic pathway. Catalyzes the ATP-dependent conversion of formylglycinamide ribonucleotide (FGAR) and glutamine to yield formylglycinamidine ribonucleotide (FGAM) and glutamate. This chain is Phosphoribosylformylglycinamidine synthase, found in Pseudomonas aeruginosa (strain ATCC 15692 / DSM 22644 / CIP 104116 / JCM 14847 / LMG 12228 / 1C / PRS 101 / PAO1).